Consider the following 145-residue polypeptide: uncharacterized protein (145 aa).

This is an uncharacterized protein from Rickettsia prowazekii (strain Madrid E).